A 248-amino-acid polypeptide reads, in one-letter code: Coproheme decarboxylase (248 aa).

Fe-coproporphyrin III contacts are provided by residues arginine 130, 144–148 (YPMDK), histidine 171, glutamine 184, and serine 222. Residue tyrosine 144 is part of the active site.

It belongs to the ChdC family. Type 1 subfamily. It depends on Fe-coproporphyrin III as a cofactor.

The enzyme catalyses Fe-coproporphyrin III + 2 H2O2 + 2 H(+) = heme b + 2 CO2 + 4 H2O. It catalyses the reaction Fe-coproporphyrin III + H2O2 + H(+) = harderoheme III + CO2 + 2 H2O. The catalysed reaction is harderoheme III + H2O2 + H(+) = heme b + CO2 + 2 H2O. It participates in porphyrin-containing compound metabolism; protoheme biosynthesis. Functionally, involved in coproporphyrin-dependent heme b biosynthesis. Catalyzes the decarboxylation of Fe-coproporphyrin III (coproheme) to heme b (protoheme IX), the last step of the pathway. The reaction occurs in a stepwise manner with a three-propionate intermediate. The protein is Coproheme decarboxylase of Geobacillus sp. (strain WCH70).